The sequence spans 189 residues: MNGLPSTEAPGGAGCALAGLPPLPRGLSGLLNASGGSWRELERVYSQRSRIHDELSRAARAPDGPRHAAGSANLGSAAGPRRPVNLDSALAALRKEMVGLRQLDMSLLCQLWGLYESIQDYKHLCQDLSLCQDLSSSLHSDSSYPPDAGLSDDDEPPDASLPPDPPPLTVPQTHNARDQWLQDAFQISL.

Position 28 is a phosphoserine (serine 28). Positions 55-81 are disordered; sequence LSRAARAPDGPRHAAGSANLGSAAGPR. Positions 68–79 are enriched in low complexity; sequence AAGSANLGSAAG. The stretch at 86-114 is one LRR repeat; the sequence is LDSALAALRKEMVGLRQLDMSLLCQLWGL. Residues 141 to 174 are disordered; it reads DSSYPPDAGLSDDDEPPDASLPPDPPPLTVPQTH. Over residues 159-169 the composition is skewed to pro residues; sequence ASLPPDPPPLT. Serine 188 is modified (phosphoserine).

It belongs to the FAM89 family. As to quaternary structure, interacts with SKI. Interacts (via LRR repeat) with CDC42BPA (via AGC-kinase C-terminal domain) and CDC42BPB (via AGC-kinase C-terminal domain). Interacts (via LRR repeat) with LIMK1 (via LIM zinc-binding domains). Forms a tripartite complex with CDC42BPA, CDC42BPB and LIMK1.

The protein localises to the cytoplasm. It is found in the cell projection. The protein resides in the lamellipodium. Negatively regulates TGF-beta-induced signaling; in cooperation with SKI prevents the translocation of SMAD2 from the nucleus to the cytoplasm in response to TGF-beta. Acts as an adapter that mediates the specific recognition of LIMK1 by CDC42BPA and CDC42BPB in the lamellipodia. LRAP25-mediated CDC42BPA/CDC42BPB targeting to LIMK1 and the lamellipodium results in LIMK1 activation and the subsequent phosphorylation of CFL1 which is important for lamellipodial F-actin regulation. In Rattus norvegicus (Rat), this protein is Leucine repeat adapter protein 25.